Consider the following 301-residue polypeptide: Methionyl-tRNA formyltransferase (301 aa).

110–113 (SLLP) contributes to the (6S)-5,6,7,8-tetrahydrofolate binding site.

It belongs to the Fmt family.

It carries out the reaction L-methionyl-tRNA(fMet) + (6R)-10-formyltetrahydrofolate = N-formyl-L-methionyl-tRNA(fMet) + (6S)-5,6,7,8-tetrahydrofolate + H(+). Functionally, attaches a formyl group to the free amino group of methionyl-tRNA(fMet). The formyl group appears to play a dual role in the initiator identity of N-formylmethionyl-tRNA by promoting its recognition by IF2 and preventing the misappropriation of this tRNA by the elongation apparatus. This Anaplasma phagocytophilum (strain HZ) protein is Methionyl-tRNA formyltransferase.